We begin with the raw amino-acid sequence, 270 residues long: Flavodoxin/ferredoxin--NADP reductase (270 aa).

The FAD-binding FR-type domain maps to 12–113 (VLPDAQTVTS…PKPVGTLVID (102 aa)). Residues 62–65 (RAYS), 78–80 (YSI), and 86–88 (PLT) each bind FAD. Thr-126 is a binding site for NADP(+). Residue Thr-128 coordinates FAD. NADP(+) is bound by residues Arg-156, 192 to 193 (TR), Arg-201, and Asp-238. 264–270 (AFVGEGI) is an FAD binding site.

Belongs to the ferredoxin--NADP reductase type 1 family. In terms of assembly, monomer. The cofactor is FAD.

The protein resides in the cytoplasm. It catalyses the reaction 2 reduced [2Fe-2S]-[ferredoxin] + NADP(+) + H(+) = 2 oxidized [2Fe-2S]-[ferredoxin] + NADPH. It carries out the reaction reduced [flavodoxin] + NADP(+) = oxidized [flavodoxin] + NADPH + 2 H(+). In terms of biological role, transports electrons between flavodoxin or ferredoxin and NADPH. The protein is Flavodoxin/ferredoxin--NADP reductase of Rhodobacter capsulatus (Rhodopseudomonas capsulata).